The chain runs to 148 residues: Small ribosomal subunit protein uS7m (148 aa).

It belongs to the universal ribosomal protein uS7 family. Part of the small ribosomal subunit.

The protein localises to the mitochondrion. Its function is as follows. One of the primary rRNA binding proteins, it binds directly to 18S rRNA where it nucleates assembly of the head domain of the small subunit. This chain is Small ribosomal subunit protein uS7m (RPS7), found in Arabidopsis thaliana (Mouse-ear cress).